A 274-amino-acid polypeptide reads, in one-letter code: Dermonecrotic toxin SdSicTox-betaIIB1bviii (274 aa).

The active site involves histidine 5. Mg(2+) is bound by residues glutamate 25 and aspartate 27. The active-site Nucleophile is the histidine 41. Cystine bridges form between cysteine 45–cysteine 51 and cysteine 47–cysteine 190. Aspartate 85 is a Mg(2+) binding site.

Belongs to the arthropod phospholipase D family. Class II subfamily. Mg(2+) is required as a cofactor. In terms of tissue distribution, expressed by the venom gland.

Its subcellular location is the secreted. The catalysed reaction is an N-(acyl)-sphingosylphosphocholine = an N-(acyl)-sphingosyl-1,3-cyclic phosphate + choline. The enzyme catalyses an N-(acyl)-sphingosylphosphoethanolamine = an N-(acyl)-sphingosyl-1,3-cyclic phosphate + ethanolamine. It carries out the reaction a 1-acyl-sn-glycero-3-phosphocholine = a 1-acyl-sn-glycero-2,3-cyclic phosphate + choline. It catalyses the reaction a 1-acyl-sn-glycero-3-phosphoethanolamine = a 1-acyl-sn-glycero-2,3-cyclic phosphate + ethanolamine. Dermonecrotic toxins cleave the phosphodiester linkage between the phosphate and headgroup of certain phospholipids (sphingolipid and lysolipid substrates), forming an alcohol (often choline) and a cyclic phosphate. This toxin acts on sphingomyelin (SM). It may also act on ceramide phosphoethanolamine (CPE), lysophosphatidylcholine (LPC) and lysophosphatidylethanolamine (LPE), but not on lysophosphatidylserine (LPS), and lysophosphatidylglycerol (LPG). It acts by transphosphatidylation, releasing exclusively cyclic phosphate products as second products. Induces dermonecrosis, hemolysis, increased vascular permeability, edema, inflammatory response, and platelet aggregation. The sequence is that of Dermonecrotic toxin SdSicTox-betaIIB1bviii from Sicarius cf. damarensis (strain GJB-2008) (Six-eyed sand spider).